The following is a 640-amino-acid chain: Probable potassium transport system protein Kup 1 (640 aa).

The next 12 membrane-spanning stretches (helical) occupy residues 24 to 44, 67 to 87, 116 to 136, 154 to 174, 186 to 206, 222 to 242, 264 to 284, 296 to 316, 354 to 374, 382 to 402, 411 to 431, and 436 to 456; these read LGAL…TSPL, IASL…VLFV, VGPL…DGMI, PFFA…LFTI, FGPV…TEVV, TFLF…VLAV, WFAL…ALIL, MLVP…ATVI, IYIP…VVGF, AAYG…ALVV, LWLC…FLGA, and VTQG…LMAT.

Belongs to the HAK/KUP transporter (TC 2.A.72) family.

It localises to the cell inner membrane. The catalysed reaction is K(+)(in) + H(+)(in) = K(+)(out) + H(+)(out). In terms of biological role, transport of potassium into the cell. Likely operates as a K(+):H(+) symporter. In Paramagnetospirillum magneticum (strain ATCC 700264 / AMB-1) (Magnetospirillum magneticum), this protein is Probable potassium transport system protein Kup 1.